The primary structure comprises 181 residues: MFASRPVVHPLEVAAPAHPVQQPAPGVLMKDLPGMPGTPGGLGLRVLQLLFAAISLAVMSSTADFASVSAFCYLITTTVLQCVWSLTVAIVDIYALLVKRCLQNRRAVTLFSIGDGITWLVSFSGACAAAGIPVLIDADLIMCSENPCASFQTAVAMGFMCCFSLLPSFLLNFYSIASSHG.

The Cytoplasmic portion of the chain corresponds to 1 to 38 (MFASRPVVHPLEVAAPAHPVQQPAPGVLMKDLPGMPGT). Residues 39–59 (PGGLGLRVLQLLFAAISLAVM) traverse the membrane as a helical segment. The Extracellular segment spans residues 60–77 (SSTADFASVSAFCYLITT). Residues 78–98 (TVLQCVWSLTVAIVDIYALLV) form a helical membrane-spanning segment. Over 99 to 115 (KRCLQNRRAVTLFSIGD) the chain is Cytoplasmic. The helical transmembrane segment at 116-136 (GITWLVSFSGACAAAGIPVLI) threads the bilayer. The Extracellular segment spans residues 137-153 (DADLIMCSENPCASFQT). A helical membrane pass occupies residues 154 to 174 (AVAMGFMCCFSLLPSFLLNFY). Topologically, residues 175–181 (SIASSHG) are cytoplasmic.

Belongs to the Casparian strip membrane proteins (CASP) family. In terms of assembly, homodimer and heterodimers.

It localises to the cell membrane. This is CASP-like protein 5A1 from Zea mays (Maize).